The following is a 191-amino-acid chain: Potassium-transporting ATPase KdpC subunit (191 aa).

Residues 6-26 form a helical membrane-spanning segment; that stretch reads PALVLFILLTLLTGGVYPLLT.

Belongs to the KdpC family. In terms of assembly, the system is composed of three essential subunits: KdpA, KdpB and KdpC.

The protein localises to the cell inner membrane. In terms of biological role, part of the high-affinity ATP-driven potassium transport (or Kdp) system, which catalyzes the hydrolysis of ATP coupled with the electrogenic transport of potassium into the cytoplasm. This subunit acts as a catalytic chaperone that increases the ATP-binding affinity of the ATP-hydrolyzing subunit KdpB by the formation of a transient KdpB/KdpC/ATP ternary complex. This chain is Potassium-transporting ATPase KdpC subunit, found in Klebsiella pneumoniae (strain 342).